The sequence spans 345 residues: High mobility group protein 20A (345 aa).

2 disordered regions span residues 1–124 and 167–198; these read MENT…TERP and QYQN…VRGV. 2 stretches are compositionally biased toward polar residues: residues 32 to 48 and 57 to 67; these read LSGS…PTLQ and LQQSGEQQLGN. Over residues 80-94 the composition is skewed to basic residues; it reads TRRGGWTKGRKRKRS. A DNA-binding region (HMG box) is located at residues 101–169; that stretch reads PKAPLTGYVR…RYTKELQQYQ (69 aa). The span at 112-124 shows a compositional bias: basic and acidic residues; it reads MNERREQLRTERP. The span at 167–180 shows a compositional bias: polar residues; that stretch reads QYQNTDAYQTYSRK. Residues 227–290 adopt a coiled-coil conformation; it reads SKAREAELRQ…QHLQSVRQAL (64 aa).

The protein resides in the nucleus. In terms of biological role, plays a role in neuronal differentiation. This chain is High mobility group protein 20A (hmg20a), found in Xenopus tropicalis (Western clawed frog).